Consider the following 229-residue polypeptide: Prolactin (229 aa).

Positions 1 to 30 (MDSKGSAQKGSRLLLLLVVSNLLLCQGVVS) are cleaved as a signal peptide. An intrachain disulfide couples Cys-34 to Cys-41. A phosphoserine mark is found at Ser-56, Ser-64, and Ser-120. 2 disulfide bridges follow: Cys-88-Cys-204 and Cys-221-Cys-229.

Belongs to the somatotropin/prolactin family. In terms of assembly, interacts with PRLR.

The protein localises to the secreted. Its function is as follows. Prolactin acts primarily on the mammary gland by promoting lactation. The protein is Prolactin (PRL) of Capra hircus (Goat).